Here is a 565-residue protein sequence, read N- to C-terminus: MSDTARISGGSFTSPPGRDVELNSFKEASQTRLYPYSSRKEEEGREDEQQRPEREEDTGALTGYKLVLVTVGLCFCIFCTSLDNTIVATAVPRITQQFHSLDDVGWYASAYLLTTCAVTLPFGRLYTFFPIKWVYLSALFVFELGSFICGITPSSLGLILGRAVAGLGGGGLFSGSLLIITQCVPLRRRPAFSGFIMSIFAVASVIAPLMGGAFTDHISWRWCFYINLPFGLVSAVVIFFTFQTTKPVVQASLREKAAGLDPLGTATFLPAIVCLLLATQWGGAQYPWGDGRIIALFTLFGVLLACFVGLQLWARERATLPPRLLRGRNIWGSALYGFCLNGAMFTFVYYLPIWFQAVQGTSATESGIRNLPLVISNVIFAIISGVLVSATGYFGPFMLLSAAMASIAAGLLSMLHPSSGAGEWIGYQVLLGSSIGMGFQLPVFVVQTTLASTDIPTATALMTFIQLLGGAIFVSVAQNVFRNQLAADIRAALPMLDPKAVINAGPTSLRAMYSGETLTTLVAMYNDAVVHTFYLAIGLAAASFLAATVIQWRPSPKSISHPDSS.

Polar residues predominate over residues 1–14; it reads MSDTARISGGSFTS. The disordered stretch occupies residues 1–57; sequence MSDTARISGGSFTSPPGRDVELNSFKEASQTRLYPYSSRKEEEGREDEQQRPEREED. The segment covering 38 to 54 has biased composition (basic and acidic residues); that stretch reads SRKEEEGREDEQQRPER. 14 consecutive transmembrane segments (helical) span residues 59–79, 103–123, 128–148, 164–184, 194–214, 222–242, 257–277, 293–313, 335–355, 378–398, 399–419, 425–445, 457–477, and 530–550; these read GALT…CIFC, DVGW…LPFG, FFPI…GSFI, VAGL…TQCV, GFIM…GGAF, WCFY…FFTF, AAGL…CLLL, IIAL…LQLW, LYGF…PIWF, VIFA…GPFM, LLSA…HPSS, IGYQ…PVFV, TATA…VSVA, and VHTF…ATVI.

The protein belongs to the major facilitator superfamily. TCR/Tet family.

Its subcellular location is the cell membrane. Its function is as follows. Efflux pump; part of the gene cluster that mediates the biosynthesis of aurasperone B, a dimeric gamma-naphthopyrone. This Aspergillus niger (strain ATCC MYA-4892 / CBS 513.88 / FGSC A1513) protein is Efflux pump aunC.